The primary structure comprises 315 residues: Protein MFI (315 aa).

In terms of assembly, can homodimerize. Interacts with MFF; the interaction inhibits MFF interaction with DNM1L. In terms of tissue distribution, enriched in the pancreatic beta cell and the testis and is expressed at low levels in other tissues tested.

It localises to the cytoplasm. Its subcellular location is the cytosol. It is found in the mitochondrion outer membrane. Functionally, acts as an inhibitor of mitochondrial fission. Interacts with MFF and prevents DNM1L recruitment to mitochondria, promoting a more fused mitochondrial network. This Mus musculus (Mouse) protein is Protein MFI.